We begin with the raw amino-acid sequence, 490 residues long: Cobyric acid synthase (490 aa).

A GATase cobBQ-type domain is found at 252 to 439 (RLKVVVPVLP…LHGLFESTAA (188 aa)). Residue Cys333 is the Nucleophile of the active site. The active site involves His431.

It belongs to the CobB/CobQ family. CobQ subfamily.

Its pathway is cofactor biosynthesis; adenosylcobalamin biosynthesis. Catalyzes amidations at positions B, D, E, and G on adenosylcobyrinic A,C-diamide. NH(2) groups are provided by glutamine, and one molecule of ATP is hydrogenolyzed for each amidation. The chain is Cobyric acid synthase from Pseudomonas aeruginosa (strain LESB58).